A 144-amino-acid polypeptide reads, in one-letter code: Ethylene-responsive transcription factor ERF019 (144 aa).

Residues 13–72 (KYKGIRRRKWGKWVSEIRVPGTRDRLWLGSFSTAEGAAVAHDVAFFCLHQPDSLESLNFP) constitute a DNA-binding region (AP2/ERF).

The protein belongs to the AP2/ERF transcription factor family. ERF subfamily.

Its subcellular location is the nucleus. Probably acts as a transcriptional activator. Binds to the GCC-box pathogenesis-related promoter element. May be involved in the regulation of gene expression by stress factors and by components of stress signal transduction pathways. This Arabidopsis thaliana (Mouse-ear cress) protein is Ethylene-responsive transcription factor ERF019 (ERF019).